A 108-amino-acid polypeptide reads, in one-letter code: Insulin (108 aa).

Positions 1 to 21 are cleaved as a signal peptide; that stretch reads MAVWLQAGALLVLLVVSSVST. Disulfide bonds link C30–C94, C42–C107, and C93–C98. Positions 54 to 84 are cleaved as a propeptide — c peptide; it reads DVEPLLGFLPPKSAQETEVADFAFKDHAELI.

It belongs to the insulin family. As to quaternary structure, heterodimer of a B chain and an A chain linked by two disulfide bonds.

Its subcellular location is the secreted. Its function is as follows. Insulin decreases blood glucose concentration. It increases cell permeability to monosaccharides, amino acids and fatty acids. It accelerates glycolysis, the pentose phosphate cycle, and glycogen synthesis in liver. This is Insulin (ins) from Danio rerio (Zebrafish).